The chain runs to 240 residues: MRGEAVQAQQISLTKYLWFPINREGWPFVGLFALGALLLGQIWGPLGWAGALLTCWCAWFFRDPDRVTPTRDGLVISPADGVVQMVGMVAPPPELDMGDAPRMRISVFMSVFSVHINRCPVDGTIVKCSYRPGKFLDASLDKASADNERMSVRMSRADGREIAFVQIAGLVARRIKCDLKDGQQVRAGQRFGLIRFGSRVDVYLPDGVAPLVSLGQSIIAGETVLADLDSTEGARQGEIR.

Ser-198 acts as the Schiff-base intermediate with substrate; via pyruvic acid in catalysis. Ser-198 is modified (pyruvic acid (Ser); by autocatalysis).

The protein belongs to the phosphatidylserine decarboxylase family. PSD-A subfamily. Heterodimer of a large membrane-associated beta subunit and a small pyruvoyl-containing alpha subunit. Requires pyruvate as cofactor. Post-translationally, is synthesized initially as an inactive proenzyme. Formation of the active enzyme involves a self-maturation process in which the active site pyruvoyl group is generated from an internal serine residue via an autocatalytic post-translational modification. Two non-identical subunits are generated from the proenzyme in this reaction, and the pyruvate is formed at the N-terminus of the alpha chain, which is derived from the carboxyl end of the proenzyme. The post-translation cleavage follows an unusual pathway, termed non-hydrolytic serinolysis, in which the side chain hydroxyl group of the serine supplies its oxygen atom to form the C-terminus of the beta chain, while the remainder of the serine residue undergoes an oxidative deamination to produce ammonia and the pyruvoyl prosthetic group on the alpha chain.

Its subcellular location is the cell membrane. The catalysed reaction is a 1,2-diacyl-sn-glycero-3-phospho-L-serine + H(+) = a 1,2-diacyl-sn-glycero-3-phosphoethanolamine + CO2. The protein operates within phospholipid metabolism; phosphatidylethanolamine biosynthesis; phosphatidylethanolamine from CDP-diacylglycerol: step 2/2. Its function is as follows. Catalyzes the formation of phosphatidylethanolamine (PtdEtn) from phosphatidylserine (PtdSer). This chain is Phosphatidylserine decarboxylase proenzyme, found in Paramagnetospirillum magneticum (strain ATCC 700264 / AMB-1) (Magnetospirillum magneticum).